Here is a 104-residue protein sequence, read N- to C-terminus: Thioredoxin-2 (104 aa).

A Thioredoxin domain is found at 2–104; it reads VTQLKSASEY…AIKQAIASNV (103 aa). Active-site nucleophile residues include C31 and C34. C31 and C34 form a disulfide bridge. Position 62 is a phosphoserine (S62). Glycyl lysine isopeptide (Lys-Gly) (interchain with G-Cter in ubiquitin) cross-links involve residues K67 and K97.

This sequence belongs to the thioredoxin family. As to quaternary structure, monomer. Part of the heterodimeric LMA1 complex together with the proteinase inhibitor PBI2. LMA1 binds to the ATPase SEC18. In terms of processing, reversible disulfide bond formation between Cys-31 and Cys-34, reverted by thioredoxin reductase TRR1 using NADPH as hydrogen donor.

It is found in the cytoplasm. The protein resides in the golgi apparatus membrane. The protein localises to the nucleus. Its function is as follows. Participates as a hydrogen donor in redox reactions through the reversible oxidation of its active center dithiol to a disulfide, accompanied by the transfer of 2 electrons and 2 protons. It is involved in many cellular processes, including deoxyribonucleotide synthesis, repair of oxidatively damaged proteins, protein folding, sulfur metabolism, and redox homeostasis. Thioredoxin-dependent enzymes include phosphoadenosine-phosphosulfate reductase MET16, alkyl-hydroperoxide reductase DOT5, thioredoxin peroxidases TSA1 and TSA2, alkyl hydroperoxide reductase AHP1, and peroxiredoxin HYR1. Thioredoxin is also involved in protection against reducing stress. As part of the LMA1 complex, it is involved in the facilitation of vesicle fusion such as homotypic vacuole and ER-derived COPII vesicle fusion with the Golgi. This activity does not require the redox mechanism. Through its capacity to inactivate the stress response transcription factor YAP1 and its regulator the hydroperoxide stress sensor HYR1, it is involved in feedback regulation of stress response gene expression upon oxidative stress. The polypeptide is Thioredoxin-2 (TRX2) (Saccharomyces cerevisiae (strain ATCC 204508 / S288c) (Baker's yeast)).